The primary structure comprises 345 residues: Anthranilate phosphoribosyltransferase (345 aa).

5-phospho-alpha-D-ribose 1-diphosphate-binding positions include Gly88, 91–92 (GD), Thr96, 98–101 (NIST), 116–124 (KHGNRSASG), and Ser128. Anthranilate is bound at residue Gly88. Residue Ser100 coordinates Mg(2+). Asn119 contributes to the anthranilate binding site. Anthranilate is bound at residue Arg174. Residues Asp233 and Glu234 each coordinate Mg(2+).

It belongs to the anthranilate phosphoribosyltransferase family. Homodimer. Mg(2+) is required as a cofactor.

It catalyses the reaction N-(5-phospho-beta-D-ribosyl)anthranilate + diphosphate = 5-phospho-alpha-D-ribose 1-diphosphate + anthranilate. The protein operates within amino-acid biosynthesis; L-tryptophan biosynthesis; L-tryptophan from chorismate: step 2/5. Functionally, catalyzes the transfer of the phosphoribosyl group of 5-phosphorylribose-1-pyrophosphate (PRPP) to anthranilate to yield N-(5'-phosphoribosyl)-anthranilate (PRA). This chain is Anthranilate phosphoribosyltransferase, found in Prochlorococcus marinus (strain NATL1A).